Reading from the N-terminus, the 769-residue chain is Serine protease HtrA-like (769 aa).

The segment covering M1–E20 has biased composition (basic residues). The segment at M1 to A390 is disordered. Composition is skewed to basic and acidic residues over residues F21 to K64 and L71 to K108. The span at Y126–K137 shows a compositional bias: polar residues. Basic and acidic residues predominate over residues S138 to S186. Residues Q247–S262 show a composition bias toward polar residues. Composition is skewed to basic and acidic residues over residues Q264–D296 and K310–N330. The span at A331–H347 shows a compositional bias: polar residues. Basic and acidic residues predominate over residues R348 to N364. Residues G365–A390 show a composition bias toward polar residues. Residues L410 to V430 traverse the membrane as a helical segment. Catalysis depends on charge relay system residues H504, D534, and S619. The PDZ domain occupies I680–D733.

Belongs to the peptidase S1C family.

Its subcellular location is the cell membrane. The polypeptide is Serine protease HtrA-like (Staphylococcus aureus (strain NCTC 8325 / PS 47)).